Consider the following 158-residue polypeptide: 2-C-methyl-D-erythritol 2,4-cyclodiphosphate synthase (158 aa).

A divalent metal cation is bound by residues aspartate 9 and histidine 11. Residues 9 to 11 (DVH) and 35 to 36 (HS) each bind 4-CDP-2-C-methyl-D-erythritol 2-phosphate. Histidine 43 is an a divalent metal cation binding site. 4-CDP-2-C-methyl-D-erythritol 2-phosphate is bound by residues 57-59 (DIG), 62-66 (FPDTD), 101-107 (AQKPKMA), 133-136 (TTTE), phenylalanine 140, and arginine 143.

It belongs to the IspF family. In terms of assembly, homotrimer. A divalent metal cation is required as a cofactor.

The catalysed reaction is 4-CDP-2-C-methyl-D-erythritol 2-phosphate = 2-C-methyl-D-erythritol 2,4-cyclic diphosphate + CMP. It functions in the pathway isoprenoid biosynthesis; isopentenyl diphosphate biosynthesis via DXP pathway; isopentenyl diphosphate from 1-deoxy-D-xylulose 5-phosphate: step 4/6. Functionally, involved in the biosynthesis of isopentenyl diphosphate (IPP) and dimethylallyl diphosphate (DMAPP), two major building blocks of isoprenoid compounds. Catalyzes the conversion of 4-diphosphocytidyl-2-C-methyl-D-erythritol 2-phosphate (CDP-ME2P) to 2-C-methyl-D-erythritol 2,4-cyclodiphosphate (ME-CPP) with a corresponding release of cytidine 5-monophosphate (CMP). The polypeptide is 2-C-methyl-D-erythritol 2,4-cyclodiphosphate synthase (Bacillus cereus (strain ATCC 10987 / NRS 248)).